The primary structure comprises 339 residues: Scoulerine-9-O-methyltransferase 3 (339 aa).

Residue methionine 161 coordinates S-adenosyl-L-methionine. Aspartate 164 serves as a coordination point for substrate. S-adenosyl-L-methionine is bound by residues threonine 165, glycine 191, aspartate 214, 228–229 (DV), and lysine 242. 243–247 (SILHE) is a substrate binding site. The active-site Proton acceptor is histidine 246.

It belongs to the class I-like SAM-binding methyltransferase superfamily. Cation-independent O-methyltransferase family. COMT subfamily. In terms of assembly, homodimer. Forms heterodimer with SOMT2. The heterodimer SOMT2-SOMT3 possesses 3-O-acetyl-4'-O-demethylpapaveroxine 4'-O-methyltransferase activity, where SOMT2 is the catalytic subunit. As to expression, highly expressed in capsules. Expressed is stems. Expressed at low levels in roots.

The enzyme catalyses (S)-scoulerine + S-adenosyl-L-methionine = (S)-tetrahydrocolumbamine + S-adenosyl-L-homocysteine + H(+). It participates in alkaloid biosynthesis. Its function is as follows. Methyltransferase involved in the biosynthesis of the benzylisoquinoline alkaloid noscapine. Catalyzes the conversion of (S)-scoulerine to (S)-tetrahydrocolumbamine. The polypeptide is Scoulerine-9-O-methyltransferase 3 (Papaver somniferum (Opium poppy)).